The sequence spans 216 residues: Ras-related protein Rab-2B (216 aa).

Positions 16, 17, 18, 19, 20, 21, and 38 each coordinate GTP. Residue Ser-20 coordinates Mg(2+). A Switch 1 motif is present at residues 37–42; that stretch reads LTIGVE. Mg(2+) contacts are provided by Thr-38 and Asp-61. The short motif at 63–72 is the Switch 2 element; sequence AGQESFRSIT. Gly-64, Asn-119, Lys-120, Asp-122, Ala-150, and Lys-151 together coordinate GTP. Residues 189–207 are compositionally biased toward polar residues; that stretch reads PQQSITSSVGPCSPQQNVS. The tract at residues 189–216 is disordered; sequence PQQSITSSVGPCSPQQNVSDIGPDSGCC. S-geranylgeranyl cysteine attachment occurs at residues Cys-215 and Cys-216.

Belongs to the small GTPase superfamily. Rab family. In terms of assembly, interacts (in GTP-bound form) with GARIN4 (via N-terminus). Interacts (in GTP-bound form) with GARIN5A. Interacts (in GTP-bound form) with GARIN1B. Interacts with VPS39 and VPS41. It depends on Mg(2+) as a cofactor.

Its subcellular location is the cell membrane. The protein resides in the endoplasmic reticulum membrane. The protein localises to the golgi apparatus membrane. It localises to the cytoplasmic vesicle. It is found in the secretory vesicle. Its subcellular location is the acrosome. The protein resides in the autophagosome membrane. It carries out the reaction GTP + H2O = GDP + phosphate + H(+). Its activity is regulated as follows. Regulated by guanine nucleotide exchange factors (GEFs) which promote the exchange of bound GDP for free GTP, GTPase activating proteins (GAPs) which increase the GTP hydrolysis activity, and GDP dissociation inhibitors (GDIs) which inhibit the dissociation of the nucleotide from the GTPase. In terms of biological role, the small GTPases Rab are key regulators of intracellular membrane trafficking, from the formation of transport vesicles to their fusion with membranes. Rabs cycle between active GTP-bound and inactive GDP-bound states. In their active state, drive transport of vesicular carriers from donor organelles to acceptor organelles to regulate the membrane traffic that maintains organelle identity and morphology. Regulates the compacted morphology of the Golgi. Promotes cytosolic DNA-induced innate immune responses. Regulates IFN responses against DNA viruses by regulating the CGAS-STING signaling axis. Together with RAB2A redundantly required for efficient autophagic flux. In Mus musculus (Mouse), this protein is Ras-related protein Rab-2B (Rab2b).